Consider the following 694-residue polypeptide: E3 ubiquitin-protein ligase SPL11 (694 aa).

Residues 1–12 (MAGDRAEEEEGE) show a composition bias toward acidic residues. 2 disordered regions span residues 1–21 (MAGD…ARAA) and 343–363 (NGME…ACSS). One can recognise a U-box domain in the interval 272–346 (TIPDEFRCPI…SQWCETNGME (75 aa)). A compositionally biased stretch (polar residues) spans 350–363 (RSTQPNKPTPACSS). 6 ARM repeats span residues 398 to 438 (NANN…NLSI), 439 to 479 (HEDN…SLSV), 480 to 520 (IDEY…NLCI), 521 to 561 (YQGN…ILSS), 562 to 602 (HPEG…HLCS), and 603 to 650 (GEHH…FLVQ). Residues 650 to 667 (QQQEEQESQSQASAQVPP) show a composition bias toward low complexity. A disordered region spans residues 650–694 (QQQEEQESQSQASAQVPPQATPEQVPENDIPEQLDSPASQYPMVV).

Interacts with SPIN1 (via N-terminus). In terms of tissue distribution, highly expressed in leaf, at intermediate levels in shoot and weakly in root.

The protein resides in the nucleus. It localises to the cytoplasm. It catalyses the reaction S-ubiquitinyl-[E2 ubiquitin-conjugating enzyme]-L-cysteine + [acceptor protein]-L-lysine = [E2 ubiquitin-conjugating enzyme]-L-cysteine + N(6)-ubiquitinyl-[acceptor protein]-L-lysine.. The protein operates within protein modification; protein ubiquitination. E3 ubiquitin-protein ligase that negatively regulates programmed cell death and disease resistance. Participates in flowering time control by mediating ubiquitination and subsequent proteasomal degradation of SPIN1. The chain is E3 ubiquitin-protein ligase SPL11 (SPL11) from Oryza sativa subsp. japonica (Rice).